We begin with the raw amino-acid sequence, 489 residues long: Probable guanine deaminase (489 aa).

H100 and H102 together coordinate Zn(2+). Substrate contacts are provided by residues 102–105, 231–232, 258–261, and D348; these read HVSQ, RF, and HLSE. Zn(2+) is bound by residues H258 and D348.

This sequence belongs to the metallo-dependent hydrolases superfamily. ATZ/TRZ family. The cofactor is Zn(2+).

The protein resides in the cytoplasm. It carries out the reaction guanine + H2O + H(+) = xanthine + NH4(+). Its pathway is purine metabolism; guanine degradation; xanthine from guanine: step 1/1. Its function is as follows. Catalyzes the hydrolytic deamination of guanine, producing xanthine and ammonia. The chain is Probable guanine deaminase (GUD1) from Saccharomyces cerevisiae (strain ATCC 204508 / S288c) (Baker's yeast).